Consider the following 320-residue polypeptide: Porphobilinogen deaminase (320 aa).

An S-(dipyrrolylmethanemethyl)cysteine modification is found at Cys-251.

The protein belongs to the HMBS family. In terms of assembly, monomer. The cofactor is dipyrromethane.

It carries out the reaction 4 porphobilinogen + H2O = hydroxymethylbilane + 4 NH4(+). It functions in the pathway porphyrin-containing compound metabolism; protoporphyrin-IX biosynthesis; coproporphyrinogen-III from 5-aminolevulinate: step 2/4. In terms of biological role, tetrapolymerization of the monopyrrole PBG into the hydroxymethylbilane pre-uroporphyrinogen in several discrete steps. The protein is Porphobilinogen deaminase of Phenylobacterium zucineum (strain HLK1).